We begin with the raw amino-acid sequence, 51 residues long: uncharacterized protein (51 aa).

This is an uncharacterized protein from Pseudoalteromonas espejiana (Bacteriophage PM2).